The primary structure comprises 1033 residues: Calcium-transporting ATPase 12, plasma membrane-type (1033 aa).

At Met1 the chain carries N-acetylmethionine. Residues 1 to 152 (MRDLKEYDYS…NTYHKPPPKG (152 aa)) lie on the Cytoplasmic side of the membrane. The interval 25–36 (QRRWRFAYAAIY) is interaction with calmodulin. The residue at position 37 (Ser37) is a Phosphoserine. Residues 153–173 (LLFFVYEAFKDLTILILLVCA) traverse the membrane as a helical segment. The Lumenal portion of the chain corresponds to 174–191 (IFSLGFGIKEHGIKEGWY). The chain crosses the membrane as a helical span at residues 192–212 (EGGSIFVAVFLVIVVSALSNF). Topologically, residues 213 to 341 (RQERQFDKLS…SERTPLQVRL (129 aa)) are cytoplasmic. The helical transmembrane segment at 342–361 (DTLTSTIGKIGLTVAALVLV) threads the bilayer. At 362–397 (VLLVRYFTGNTEKEGKREYNGSKTPVDTVVNSVVRI) the chain is on the lumenal side. The chain crosses the membrane as a helical span at residues 398-415 (VAAAVTIVVVAIPEGLPL). The Cytoplasmic segment spans residues 416-806 (AVTLTLAYSM…KWGRCVYNNI (391 aa)). The 4-aspartylphosphate intermediate role is filled by Asp453. Mg(2+) is bound by residues Asp751 and Asp755. A helical membrane pass occupies residues 807-825 (QKFIQFQLTVNVAALVINF). Residues 826 to 836 (IAAISAGEVPL) are Lumenal-facing. A helical membrane pass occupies residues 837–857 (TAVQLLWVNLIMDTLGALALA). The Cytoplasmic segment spans residues 858 to 877 (TERPTNELLKRKPVGRTEAL). A helical transmembrane segment spans residues 878 to 900 (ITNVMWRNLLVQSLYQIAVLLIL). Over 901–909 (QFKGMSIFS) the chain is Lumenal. The helical transmembrane segment at 910-930 (VRKEVKDTLIFNTFVLCQVFN) threads the bilayer. Topologically, residues 931–948 (EFNAREMEKKNVFKGLHR) are cytoplasmic. The chain crosses the membrane as a helical span at residues 949 to 970 (NRLFIGIIAITIVLQVIMVEFL). The Lumenal segment spans residues 971 to 980 (KKFADTVRLN). The chain crosses the membrane as a helical span at residues 981–1002 (GWQWGTCIALASLSWPIGFFTK). Residues 1003 to 1006 (FIPV) lie on the Cytoplasmic side of the membrane.

This sequence belongs to the cation transport ATPase (P-type) (TC 3.A.3) family. Type IIB subfamily.

It is found in the membrane. The enzyme catalyses Ca(2+)(in) + ATP + H2O = Ca(2+)(out) + ADP + phosphate + H(+). Its activity is regulated as follows. Activated by calmodulin. Functionally, this magnesium-dependent enzyme catalyzes the hydrolysis of ATP coupled with the translocation of calcium from the cytosol out of the cell or into organelles. The protein is Calcium-transporting ATPase 12, plasma membrane-type (ACA12) of Arabidopsis thaliana (Mouse-ear cress).